The primary structure comprises 148 residues: 3-dehydroquinate dehydratase (148 aa).

The active-site Proton acceptor is tyrosine 26. Residues asparagine 77, histidine 83, and aspartate 90 each coordinate substrate. Histidine 103 acts as the Proton donor in catalysis. Residues 104–105 (LS) and arginine 114 contribute to the substrate site.

This sequence belongs to the type-II 3-dehydroquinase family. In terms of assembly, homododecamer.

The catalysed reaction is 3-dehydroquinate = 3-dehydroshikimate + H2O. Its pathway is metabolic intermediate biosynthesis; chorismate biosynthesis; chorismate from D-erythrose 4-phosphate and phosphoenolpyruvate: step 3/7. Functionally, catalyzes a trans-dehydration via an enolate intermediate. The protein is 3-dehydroquinate dehydratase of Chlorobaculum tepidum (strain ATCC 49652 / DSM 12025 / NBRC 103806 / TLS) (Chlorobium tepidum).